Consider the following 443-residue polypeptide: L-ornithine N(5)-monooxygenase (443 aa).

Residues 45–53 (DKQGDYRWH) and Q64 each bind FAD. Residue K69 coordinates substrate. FAD is bound at residue V130. NADP(+)-binding positions include 215 to 218 (GGQS) and R240. Residues 254–257 (NEVF) and N284 contribute to the substrate site. 284–286 (NYS) is a binding site for NADP(+). 407 to 409 (TLL) contributes to the FAD binding site. Substrate is bound at residue S410.

Belongs to the lysine N(6)-hydroxylase/L-ornithine N(5)-oxygenase family. As to quaternary structure, homotetramer. FAD is required as a cofactor.

The protein localises to the cell inner membrane. It carries out the reaction L-ornithine + NADPH + O2 = N(5)-hydroxy-L-ornithine + NADP(+) + H2O. It functions in the pathway siderophore biosynthesis; pyoverdin biosynthesis. Functionally, catalyzes the conversion of L-ornithine to N(5)-hydroxyornithine, the first step in the biosynthesis of all hydroxamate-containing siderophores, such as pyoverdin. Pyoverdin is a hydroxamate siderophore composed of a 6,7-dihydroxyquinoline-containing fluorescent chromophore joined to the N-terminus of a partly cyclic octapeptide (D-Ser-L-Arg-D-Ser-L-N(5)-OH-Orn-L-Lys-L-N(5)-OH-Orn-L-Thr-L-Thr in strain PAO1). Specific for NADPH, which plays a role in stabilization of the C4a-hydroperoxyflavin intermediate. The sequence is that of L-ornithine N(5)-monooxygenase from Pseudomonas aeruginosa (strain ATCC 15692 / DSM 22644 / CIP 104116 / JCM 14847 / LMG 12228 / 1C / PRS 101 / PAO1).